We begin with the raw amino-acid sequence, 148 residues long: D-aminoacyl-tRNA deacylase (148 aa).

A Gly-cisPro motif, important for rejection of L-amino acids motif is present at residues 136 to 137; sequence GP.

It belongs to the DTD family. As to quaternary structure, homodimer.

It is found in the cytoplasm. The enzyme catalyses glycyl-tRNA(Ala) + H2O = tRNA(Ala) + glycine + H(+). It carries out the reaction a D-aminoacyl-tRNA + H2O = a tRNA + a D-alpha-amino acid + H(+). Functionally, an aminoacyl-tRNA editing enzyme that deacylates mischarged D-aminoacyl-tRNAs. Also deacylates mischarged glycyl-tRNA(Ala), protecting cells against glycine mischarging by AlaRS. Acts via tRNA-based rather than protein-based catalysis; rejects L-amino acids rather than detecting D-amino acids in the active site. By recycling D-aminoacyl-tRNA to D-amino acids and free tRNA molecules, this enzyme counteracts the toxicity associated with the formation of D-aminoacyl-tRNA entities in vivo and helps enforce protein L-homochirality. The protein is D-aminoacyl-tRNA deacylase of Streptococcus mutans serotype c (strain ATCC 700610 / UA159).